The following is a 329-amino-acid chain: Glycerol-3-phosphate dehydrogenase [NAD(P)+] (329 aa).

NADPH-binding residues include tryptophan 15, histidine 35, and lysine 107. Sn-glycerol 3-phosphate contacts are provided by lysine 107, glycine 135, and serine 137. Alanine 139 serves as a coordination point for NADPH. Sn-glycerol 3-phosphate-binding residues include lysine 190, aspartate 243, serine 253, arginine 254, and asparagine 255. Lysine 190 acts as the Proton acceptor in catalysis. NADPH is bound at residue arginine 254. 2 residues coordinate NADPH: leucine 276 and glutamate 278.

It belongs to the NAD-dependent glycerol-3-phosphate dehydrogenase family.

It localises to the cytoplasm. It carries out the reaction sn-glycerol 3-phosphate + NAD(+) = dihydroxyacetone phosphate + NADH + H(+). The enzyme catalyses sn-glycerol 3-phosphate + NADP(+) = dihydroxyacetone phosphate + NADPH + H(+). The protein operates within membrane lipid metabolism; glycerophospholipid metabolism. Catalyzes the reduction of the glycolytic intermediate dihydroxyacetone phosphate (DHAP) to sn-glycerol 3-phosphate (G3P), the key precursor for phospholipid synthesis. This chain is Glycerol-3-phosphate dehydrogenase [NAD(P)+], found in Rhodopseudomonas palustris (strain BisB5).